Here is a 677-residue protein sequence, read N- to C-terminus: Amine oxidase [copper-containing] alpha 2, peroxisomal (677 aa).

Tyrosine 320–threonine 331 serves as a coordination point for substrate. The Proton acceptor role is filled by aspartate 322. Cysteines 341 and 367 form a disulfide. Valine 407–tyrosine 412 serves as a coordination point for substrate. Tyrosine 410 (schiff-base intermediate with substrate; via topaquinone) is an active-site residue. Tyrosine 410 carries the 2',4',5'-topaquinone modification. The Cu cation site is built by histidine 466 and histidine 468. Mn(2+) contacts are provided by aspartate 477, aspartate 617, and isoleucine 618. A Cu cation-binding site is contributed by histidine 628.

This sequence belongs to the copper/topaquinone oxidase family. In terms of assembly, homodimer. It depends on Cu cation as a cofactor. Zn(2+) is required as a cofactor. The cofactor is L-topaquinone. Topaquinone (TPQ) is generated by copper-dependent autoxidation of a specific tyrosyl residue. In terms of tissue distribution, expressed exclusively in leaves.

The protein resides in the peroxisome. The enzyme catalyses a primary methyl amine + O2 + H2O = an aldehyde + H2O2 + NH4(+). Its pathway is amine and polyamine degradation; putrescine degradation. Its function is as follows. Copper amine oxidase that can use putrescine and spermidine as substrates. Involved in putrescine catabolism in peroxisomes in response to salt stress. Regulates arginine-dependent nitric oxide (NO) production, a key signaling molecule regulating a wide range of physiological processes including responses to salt stress, by influencing arginine bioavailability. Modulates primary root growth. The sequence is that of Amine oxidase [copper-containing] alpha 2, peroxisomal from Arabidopsis thaliana (Mouse-ear cress).